The primary structure comprises 286 residues: Lipoyl synthase (286 aa).

The [4Fe-4S] cluster site is built by C29, C34, C40, C55, C59, C62, and S265. The 214-residue stretch at W41 to S254 folds into the Radical SAM core domain.

The protein belongs to the radical SAM superfamily. Lipoyl synthase family. It depends on [4Fe-4S] cluster as a cofactor.

It is found in the cytoplasm. It catalyses the reaction [[Fe-S] cluster scaffold protein carrying a second [4Fe-4S](2+) cluster] + N(6)-octanoyl-L-lysyl-[protein] + 2 oxidized [2Fe-2S]-[ferredoxin] + 2 S-adenosyl-L-methionine + 4 H(+) = [[Fe-S] cluster scaffold protein] + N(6)-[(R)-dihydrolipoyl]-L-lysyl-[protein] + 4 Fe(3+) + 2 hydrogen sulfide + 2 5'-deoxyadenosine + 2 L-methionine + 2 reduced [2Fe-2S]-[ferredoxin]. It functions in the pathway protein modification; protein lipoylation via endogenous pathway; protein N(6)-(lipoyl)lysine from octanoyl-[acyl-carrier-protein]: step 2/2. In terms of biological role, catalyzes the radical-mediated insertion of two sulfur atoms into the C-6 and C-8 positions of the octanoyl moiety bound to the lipoyl domains of lipoate-dependent enzymes, thereby converting the octanoylated domains into lipoylated derivatives. This Sulfolobus acidocaldarius (strain ATCC 33909 / DSM 639 / JCM 8929 / NBRC 15157 / NCIMB 11770) protein is Lipoyl synthase.